Consider the following 319-residue polypeptide: MKEKRALFVAGPTCSGKSALALAVAERLGGTVINADSMQIYRELRILTARPDQEEEARVPHRLYGVLPASQPGSAAWWRDQAITAMEESWQQGRLPILCGGTGLYFHALMHGFADIPDPGEEARQEARSLLAELGPESLHARLAEADPATAARLKPQDSQRIARAWEVWRGTESGLSAWQNQPPRPLPGWDFAAIRIDPPREELRQAITARLHGMLDNGALAEVEALRVQALDPSLPAMRAHGVPEFLAFLRGDISLPEAMQRAAQATIRYTKRQATWFRNRPFVKPPFLYTIDARIASFQQLSERSMADMLNFIRAFH.

Position 11–18 (11–18 (GPTCSGKS)) interacts with ATP. Residue 13–18 (TCSGKS) participates in substrate binding. Interaction with substrate tRNA stretches follow at residues 36–39 (DSMQ) and 160–164 (QRIAR).

It belongs to the IPP transferase family. In terms of assembly, monomer. The cofactor is Mg(2+).

The enzyme catalyses adenosine(37) in tRNA + dimethylallyl diphosphate = N(6)-dimethylallyladenosine(37) in tRNA + diphosphate. Functionally, catalyzes the transfer of a dimethylallyl group onto the adenine at position 37 in tRNAs that read codons beginning with uridine, leading to the formation of N6-(dimethylallyl)adenosine (i(6)A). In Granulibacter bethesdensis (strain ATCC BAA-1260 / CGDNIH1), this protein is tRNA dimethylallyltransferase.